The chain runs to 484 residues: Probable cytosol aminopeptidase (484 aa).

Lys-256 and Asp-261 together coordinate Mn(2+). Lys-268 is an active-site residue. Mn(2+) is bound by residues Asp-279, Asp-338, and Glu-340. Arg-342 is an active-site residue.

This sequence belongs to the peptidase M17 family. Requires Mn(2+) as cofactor.

Its subcellular location is the cytoplasm. It catalyses the reaction Release of an N-terminal amino acid, Xaa-|-Yaa-, in which Xaa is preferably Leu, but may be other amino acids including Pro although not Arg or Lys, and Yaa may be Pro. Amino acid amides and methyl esters are also readily hydrolyzed, but rates on arylamides are exceedingly low.. The catalysed reaction is Release of an N-terminal amino acid, preferentially leucine, but not glutamic or aspartic acids.. Functionally, presumably involved in the processing and regular turnover of intracellular proteins. Catalyzes the removal of unsubstituted N-terminal amino acids from various peptides. This is Probable cytosol aminopeptidase from Actinobacillus succinogenes (strain ATCC 55618 / DSM 22257 / CCUG 43843 / 130Z).